A 427-amino-acid polypeptide reads, in one-letter code: Enolase 2 (427 aa).

Gln-163 contacts (2R)-2-phosphoglycerate. The active-site Proton donor is the Glu-205. Residues Asp-242, Glu-285, and Asp-312 each contribute to the Mg(2+) site. Residues Lys-337, Arg-366, Ser-367, and Lys-388 each contribute to the (2R)-2-phosphoglycerate site. Lys-337 serves as the catalytic Proton acceptor.

Belongs to the enolase family. In terms of assembly, component of the RNA degradosome, a multiprotein complex involved in RNA processing and mRNA degradation. Mg(2+) is required as a cofactor.

The protein resides in the cytoplasm. The protein localises to the secreted. It is found in the cell surface. It catalyses the reaction (2R)-2-phosphoglycerate = phosphoenolpyruvate + H2O. The protein operates within carbohydrate degradation; glycolysis; pyruvate from D-glyceraldehyde 3-phosphate: step 4/5. Its function is as follows. Catalyzes the reversible conversion of 2-phosphoglycerate (2-PG) into phosphoenolpyruvate (PEP). It is essential for the degradation of carbohydrates via glycolysis. This chain is Enolase 2, found in Methylococcus capsulatus (strain ATCC 33009 / NCIMB 11132 / Bath).